The following is a 525-amino-acid chain: GMP synthase [glutamine-hydrolyzing] (525 aa).

The region spanning 9–207 (RILILDFGSQ…VVDICKCEKL (199 aa)) is the Glutamine amidotransferase type-1 domain. Residue Cys-86 is the Nucleophile of the active site. Catalysis depends on residues His-181 and Glu-183. The 193-residue stretch at 208 to 400 (WTSASIIDDA…LGLPYDMLYR (193 aa)) folds into the GMPS ATP-PPase domain. 235–241 (SGGVDSS) lines the ATP pocket.

Homodimer.

The catalysed reaction is XMP + L-glutamine + ATP + H2O = GMP + L-glutamate + AMP + diphosphate + 2 H(+). It functions in the pathway purine metabolism; GMP biosynthesis; GMP from XMP (L-Gln route): step 1/1. Its function is as follows. Catalyzes the synthesis of GMP from XMP. The chain is GMP synthase [glutamine-hydrolyzing] from Colwellia psychrerythraea (strain 34H / ATCC BAA-681) (Vibrio psychroerythus).